The chain runs to 94 residues: Large ribosomal subunit protein eL42 (94 aa).

Zn(2+)-binding residues include cysteine 11, cysteine 14, cysteine 71, and cysteine 74. Residues 11 to 74 form a C4-type zinc finger; the sequence is CPFCKRHTIH…LDLRFRCTVC (64 aa).

This sequence belongs to the eukaryotic ribosomal protein eL42 family. As to quaternary structure, part of the 50S ribosomal subunit. It depends on Zn(2+) as a cofactor.

In terms of biological role, binds to the 23S rRNA. The chain is Large ribosomal subunit protein eL42 from Thermococcus kodakarensis (strain ATCC BAA-918 / JCM 12380 / KOD1) (Pyrococcus kodakaraensis (strain KOD1)).